Here is a 1241-residue protein sequence, read N- to C-terminus: Interphotoreceptor matrix proteoglycan 2 (1241 aa).

The signal sequence occupies residues 1–28 (MIMFLPLGRISLGILILFLTGGNLVSVS). At 29–1104 (EEIQDRMHAV…CEEFVSEPFV (1076 aa)) the chain is on the extracellular side. An O-linked (GalNAc...) threonine glycan is attached at Thr-193. The disordered stretch occupies residues 206-234 (AASERSAASPQESISNEIENVTEQPTPPA). The span at 211-229 (SAASPQESISNEIENVTEQ) shows a compositional bias: polar residues. An N-linked (GlcNAc...) asparagine glycan is attached at Asn-225. Thr-231 carries an O-linked (GalNAc...) threonine glycan. Residues 235–349 (AEQIAEFSIQ…KPTAVYTISN (115 aa)) enclose the SEA 1 domain. The hyaluronan-binding motif involved in chondroitin sulfate A-binding stretch occupies residues 255 to 263 (RDPSSALYR). N-linked (GlcNAc...) asparagine glycans are attached at residues Asn-297, Asn-316, and Asn-366. O-linked (GalNAc...) threonine glycosylation is found at Thr-429, Thr-430, and Thr-431. The segment covering 431–443 (TISPFGFSSGPPS) has biased composition (low complexity). Disordered stretches follow at residues 431 to 456 (TISPFGFSSGPPSATGRELHSESTLG) and 500 to 520 (VAPEGRTSGSSILEDDNTEES). Thr-817 carries O-linked (GalNAc...) threonine glycosylation. N-linked (GlcNAc...) asparagine glycans are attached at residues Asn-841, Asn-945, and Asn-959. The SEA 2 domain maps to 900–1013 (GALVVFFSLR…YSLDVESGDD (114 aa)). EGF-like domains follow at residues 1013–1054 (DANP…LPCQ) and 1055–1096 (SVCD…QHCE). Cystine bridges form between Cys-1017-Cys-1028, Cys-1022-Cys-1039, Cys-1041-Cys-1053, Cys-1057-Cys-1070, Cys-1064-Cys-1080, and Cys-1082-Cys-1095. The segment at 1083–1091 (RVGSNWWYR) is hyaluronan-binding motif involved in chondroitin sulfate C-binding. A helical transmembrane segment spans residues 1105–1125 (IGITIASVVSLLLVASAVVFF). The Cytoplasmic portion of the chain corresponds to 1126–1241 (LAKMLQAQNV…FVREHEMEEL (116 aa)). The tract at residues 1128 to 1136 (KMLQAQNVR) is hyaluronan-binding motif involved in chondroitin sulfate A- and C-binding. A hyaluronan-binding motif involved in chondroitin sulfate C-binding region spans residues 1139 to 1145 (RQRPTNR). The hyaluronan-binding motif involved in chondroitin sulfate A- and C-binding motif stretch occupies residues 1210 to 1218 (KEEIQERMR).

As to expression, expressed in the pineal gland and the outer layer of the retina.

The protein localises to the photoreceptor outer segment membrane. The protein resides in the photoreceptor inner segment membrane. Its subcellular location is the secreted. It is found in the extracellular space. It localises to the extracellular matrix. The protein localises to the interphotoreceptor matrix. In terms of biological role, chondroitin sulfate- and hyaluronan-binding proteoglycan involved in the organization of interphotoreceptor matrix; may participate in the maturation and maintenance of the light-sensitive photoreceptor outer segment. Binds heparin. This chain is Interphotoreceptor matrix proteoglycan 2 (Impg2), found in Rattus norvegicus (Rat).